The following is a 478-amino-acid chain: Protein WVD2-like 7 (478 aa).

Disordered stretches follow at residues 201–326 (DSAL…TGST) and 385–420 (PMPS…SASI). Residues 208 to 217 (AGSKLDEHAS) are compositionally biased toward basic and acidic residues. Polar residues-rich tracts occupy residues 219 to 232 (KPSN…SSVN) and 264 to 277 (GSSL…NVDA). Residues 278–289 (KSQKELRPKKTI) show a composition bias toward basic and acidic residues. Composition is skewed to polar residues over residues 309–326 (RCKT…TGST) and 407–420 (VAQS…SASI).

The protein belongs to the TPX2 family. As to expression, expressed in seedlings.

It localises to the cytoplasm. Its subcellular location is the cytoskeleton. In terms of biological role, microtubule-associated protein (MAP) that regulates the orientation of interphase cortical microtubules. This Arabidopsis thaliana (Mouse-ear cress) protein is Protein WVD2-like 7.